Consider the following 450-residue polypeptide: Bifunctional protein GlmU (450 aa).

The segment at methionine 1 to arginine 228 is pyrophosphorylase. UDP-N-acetyl-alpha-D-glucosamine is bound by residues leucine 8–glycine 11, lysine 22, glutamine 75, glycine 80–threonine 81, tyrosine 103–aspartate 105, glycine 140, glutamate 154, asparagine 169, and asparagine 226. Aspartate 105 provides a ligand contact to Mg(2+). A Mg(2+)-binding site is contributed by asparagine 226. A linker region spans residues alanine 229–leucine 249. The N-acetyltransferase stretch occupies residues glycine 250–threonine 450. UDP-N-acetyl-alpha-D-glucosamine is bound by residues arginine 315 and lysine 333. Histidine 345 serves as the catalytic Proton acceptor. UDP-N-acetyl-alpha-D-glucosamine-binding residues include tyrosine 348 and asparagine 359. Acetyl-CoA is bound by residues alanine 362, asparagine 368–tyrosine 369, serine 387, threonine 405, and arginine 422.

This sequence in the N-terminal section; belongs to the N-acetylglucosamine-1-phosphate uridyltransferase family. It in the C-terminal section; belongs to the transferase hexapeptide repeat family. As to quaternary structure, homotrimer. The cofactor is Mg(2+).

Its subcellular location is the cytoplasm. The enzyme catalyses alpha-D-glucosamine 1-phosphate + acetyl-CoA = N-acetyl-alpha-D-glucosamine 1-phosphate + CoA + H(+). It carries out the reaction N-acetyl-alpha-D-glucosamine 1-phosphate + UTP + H(+) = UDP-N-acetyl-alpha-D-glucosamine + diphosphate. It functions in the pathway nucleotide-sugar biosynthesis; UDP-N-acetyl-alpha-D-glucosamine biosynthesis; N-acetyl-alpha-D-glucosamine 1-phosphate from alpha-D-glucosamine 6-phosphate (route II): step 2/2. The protein operates within nucleotide-sugar biosynthesis; UDP-N-acetyl-alpha-D-glucosamine biosynthesis; UDP-N-acetyl-alpha-D-glucosamine from N-acetyl-alpha-D-glucosamine 1-phosphate: step 1/1. It participates in bacterial outer membrane biogenesis; LPS lipid A biosynthesis. In terms of biological role, catalyzes the last two sequential reactions in the de novo biosynthetic pathway for UDP-N-acetylglucosamine (UDP-GlcNAc). The C-terminal domain catalyzes the transfer of acetyl group from acetyl coenzyme A to glucosamine-1-phosphate (GlcN-1-P) to produce N-acetylglucosamine-1-phosphate (GlcNAc-1-P), which is converted into UDP-GlcNAc by the transfer of uridine 5-monophosphate (from uridine 5-triphosphate), a reaction catalyzed by the N-terminal domain. This chain is Bifunctional protein GlmU, found in Ruegeria pomeroyi (strain ATCC 700808 / DSM 15171 / DSS-3) (Silicibacter pomeroyi).